The chain runs to 779 residues: Neutral ceramidase 1 (779 aa).

The Nucleophile role is filled by Ser350. Asn368, Asn432, and Asn667 each carry an N-linked (GlcNAc...) asparagine glycan.

The protein belongs to the neutral ceramidase family. In terms of tissue distribution, mostly expressed in stems, leaves, roots and siliques, and, to a lower extent, in flowers.

The protein resides in the secreted. It is found in the endoplasmic reticulum. It localises to the golgi apparatus. It catalyses the reaction an N-acylsphing-4-enine + H2O = sphing-4-enine + a fatty acid. Hydrolyzes the sphingolipid ceramide into sphingosine and free fatty acid. Regulates sphingolipid homeostasis. Promotes oxidative stress resistance. This Arabidopsis thaliana (Mouse-ear cress) protein is Neutral ceramidase 1.